The primary structure comprises 453 residues: Pup--protein ligase (453 aa).

Residue glutamate 9 coordinates Mg(2+). ATP is bound at residue arginine 53. Tyrosine 55 serves as a coordination point for Mg(2+). Aspartate 57 acts as the Proton acceptor in catalysis. Glutamate 63 lines the Mg(2+) pocket. ATP contacts are provided by threonine 66 and tryptophan 420.

This sequence belongs to the Pup ligase/Pup deamidase family. Pup-conjugating enzyme subfamily.

The enzyme catalyses ATP + [prokaryotic ubiquitin-like protein]-L-glutamate + [protein]-L-lysine = ADP + phosphate + N(6)-([prokaryotic ubiquitin-like protein]-gamma-L-glutamyl)-[protein]-L-lysine.. It participates in protein degradation; proteasomal Pup-dependent pathway. It functions in the pathway protein modification; protein pupylation. In terms of biological role, catalyzes the covalent attachment of the prokaryotic ubiquitin-like protein modifier Pup to the proteasomal substrate proteins, thereby targeting them for proteasomal degradation. This tagging system is termed pupylation. The ligation reaction involves the side-chain carboxylate of the C-terminal glutamate of Pup and the side-chain amino group of a substrate lysine. In Streptomyces scabiei (strain 87.22), this protein is Pup--protein ligase.